The following is a 64-amino-acid chain: Large ribosomal subunit protein bL28 (64 aa).

The protein belongs to the bacterial ribosomal protein bL28 family.

The sequence is that of Large ribosomal subunit protein bL28 from Desulfotalea psychrophila (strain LSv54 / DSM 12343).